The chain runs to 251 residues: 5'-nucleotidase SurE (251 aa).

A divalent metal cation contacts are provided by Asp8, Asp9, Ser39, and Asn91.

Belongs to the SurE nucleotidase family. It depends on a divalent metal cation as a cofactor.

It is found in the cytoplasm. The enzyme catalyses a ribonucleoside 5'-phosphate + H2O = a ribonucleoside + phosphate. Functionally, nucleotidase that shows phosphatase activity on nucleoside 5'-monophosphates. The polypeptide is 5'-nucleotidase SurE (Nitrosococcus oceani (strain ATCC 19707 / BCRC 17464 / JCM 30415 / NCIMB 11848 / C-107)).